We begin with the raw amino-acid sequence, 191 residues long: Fe/S biogenesis protein NfuA (191 aa).

[4Fe-4S] cluster-binding residues include Cys-149 and Cys-152.

Belongs to the NfuA family. Homodimer. [4Fe-4S] cluster serves as cofactor.

Functionally, involved in iron-sulfur cluster biogenesis. Binds a 4Fe-4S cluster, can transfer this cluster to apoproteins, and thereby intervenes in the maturation of Fe/S proteins. Could also act as a scaffold/chaperone for damaged Fe/S proteins. The chain is Fe/S biogenesis protein NfuA from Enterobacter sp. (strain 638).